Consider the following 336-residue polypeptide: 3-isopropylmalate dehydrogenase (336 aa).

Residues Arg87, Arg97, Arg121, and Asp211 each contribute to the substrate site. Mg(2+) is bound by residues Asp211, Asp235, and Asp239. 271–283 serves as a coordination point for NAD(+); sequence GSAPDIAGQGIAD.

It belongs to the isocitrate and isopropylmalate dehydrogenases family. LeuB type 2 subfamily. As to quaternary structure, homodimer. Mg(2+) serves as cofactor. It depends on Mn(2+) as a cofactor.

Its subcellular location is the cytoplasm. It catalyses the reaction (2R,3S)-3-isopropylmalate + NAD(+) = 4-methyl-2-oxopentanoate + CO2 + NADH. It functions in the pathway amino-acid biosynthesis; L-leucine biosynthesis; L-leucine from 3-methyl-2-oxobutanoate: step 3/4. Its function is as follows. Catalyzes the oxidation of 3-carboxy-2-hydroxy-4-methylpentanoate (3-isopropylmalate) to 3-carboxy-4-methyl-2-oxopentanoate. The product decarboxylates to 4-methyl-2 oxopentanoate. The sequence is that of 3-isopropylmalate dehydrogenase (leuB) from Mycobacterium tuberculosis (strain CDC 1551 / Oshkosh).